The sequence spans 333 residues: MANRVVLDFEKPLFELEAKLEEMRVYLRNSSRDQDSSDQDVLNREIEALEVKVETLRRSIYKNLTRWQKVQLARHAERPFTLDYIYMMTRDFVEMAGDRYFSDDKAIVGGFAILEDIPSGFSQPVMIIGHQKGRDTKSNLYRNFGMAQPEGYRKALRLMKLAEKFNKPVITLIDTPGAFPGIEAEERGQAEAIARNLFEMARLTVPVICVIVGEGASGGAIGLGVGNRILMAENSWYSVISPESCSSILWRSWNYKEQAAEALQPTAEDLLAQGIIDRIIPEPMGGAHTDPEAMAGTLKEMLIEELRILMSKESDVLVRERVEKFSGMGVWDE.

Positions 48–308 constitute a CoA carboxyltransferase C-terminal domain; it reads ALEVKVETLR…KEMLIEELRI (261 aa).

It belongs to the AccA family. In terms of assembly, acetyl-CoA carboxylase is a heterohexamer composed of biotin carboxyl carrier protein (AccB), biotin carboxylase (AccC) and two subunits each of ACCase subunit alpha (AccA) and ACCase subunit beta (AccD).

Its subcellular location is the cytoplasm. It carries out the reaction N(6)-carboxybiotinyl-L-lysyl-[protein] + acetyl-CoA = N(6)-biotinyl-L-lysyl-[protein] + malonyl-CoA. It functions in the pathway lipid metabolism; malonyl-CoA biosynthesis; malonyl-CoA from acetyl-CoA: step 1/1. Its function is as follows. Component of the acetyl coenzyme A carboxylase (ACC) complex. First, biotin carboxylase catalyzes the carboxylation of biotin on its carrier protein (BCCP) and then the CO(2) group is transferred by the carboxyltransferase to acetyl-CoA to form malonyl-CoA. This chain is Acetyl-coenzyme A carboxylase carboxyl transferase subunit alpha, found in Chlorobium phaeobacteroides (strain DSM 266 / SMG 266 / 2430).